The primary structure comprises 362 residues: Peptide chain release factor 1 (362 aa).

Residue glutamine 236 is modified to N5-methylglutamine.

Belongs to the prokaryotic/mitochondrial release factor family. Methylated by PrmC. Methylation increases the termination efficiency of RF1.

The protein localises to the cytoplasm. In terms of biological role, peptide chain release factor 1 directs the termination of translation in response to the peptide chain termination codons UAG and UAA. The polypeptide is Peptide chain release factor 1 (Lactobacillus gasseri (strain ATCC 33323 / DSM 20243 / BCRC 14619 / CIP 102991 / JCM 1131 / KCTC 3163 / NCIMB 11718 / NCTC 13722 / AM63)).